The following is a 421-amino-acid chain: 5-methylthioadenosine/S-adenosylhomocysteine deaminase (421 aa).

Zn(2+) contacts are provided by His-60 and His-62. The substrate site is built by Glu-89 and His-181. Zn(2+) is bound at residue His-208. Positions 211 and 296 each coordinate substrate. Asp-296 contacts Zn(2+).

Belongs to the metallo-dependent hydrolases superfamily. MTA/SAH deaminase family. The cofactor is Zn(2+).

The enzyme catalyses S-adenosyl-L-homocysteine + H2O + H(+) = S-inosyl-L-homocysteine + NH4(+). It catalyses the reaction S-methyl-5'-thioadenosine + H2O + H(+) = S-methyl-5'-thioinosine + NH4(+). Catalyzes the deamination of 5-methylthioadenosine and S-adenosyl-L-homocysteine into 5-methylthioinosine and S-inosyl-L-homocysteine, respectively. Is also able to deaminate adenosine. This chain is 5-methylthioadenosine/S-adenosylhomocysteine deaminase, found in Pyrococcus horikoshii (strain ATCC 700860 / DSM 12428 / JCM 9974 / NBRC 100139 / OT-3).